A 457-amino-acid chain; its full sequence is Exodeoxyribonuclease 7 large subunit (457 aa).

This sequence belongs to the XseA family. In terms of assembly, heterooligomer composed of large and small subunits.

The protein localises to the cytoplasm. The enzyme catalyses Exonucleolytic cleavage in either 5'- to 3'- or 3'- to 5'-direction to yield nucleoside 5'-phosphates.. Its function is as follows. Bidirectionally degrades single-stranded DNA into large acid-insoluble oligonucleotides, which are then degraded further into small acid-soluble oligonucleotides. This is Exodeoxyribonuclease 7 large subunit from Enterobacter sp. (strain 638).